The sequence spans 207 residues: MLISKTLIFYQVVNIVSQKGSGKRRWKMENGDRYVYVVDVSKCYGCLSCVAACAAENNVPVGYFRTWVERYAMNGRVAFVPKICNHCDNPSCVHACPVNATYKTEEGLVLIDDEICIGCGACIQACPYGARFRNPVKGTADKCTLCNHRIPERLPACVESCPTSARVYGKMSDKAVKEILSKKNAVVLKAYTGNEPHTYYVSLTGVE.

An N-terminal signal peptide occupies residues 1–28 (MLISKTLIFYQVVNIVSQKGSGKRRWKM). 3 4Fe-4S ferredoxin-type domains span residues 34–63 (YVYV…PVGY), 75–106 (GRVA…KTEE), and 107–136 (GLVL…RNPV). Residues Cys-43, Cys-46, Cys-49, Cys-53, Cys-84, Cys-87, Cys-92, Cys-96, Cys-116, Cys-119, Cys-122, Cys-126, Cys-143, Cys-146, Cys-157, and Cys-161 each coordinate [4Fe-4S] cluster.

As to quaternary structure, probably composed of three subunits: TtrA, TtrB and TtrC.

Its subcellular location is the cell membrane. Its function is as follows. Part of a membrane-bound tetrathionate reductase that catalyzes the reduction of tetrathionate to thiosulfate. TtrB is probably involved in transfer of electrons from TtrC to TtrA. The chain is Tetrathionate reductase subunit B (ttrB) from Archaeoglobus fulgidus (strain ATCC 49558 / DSM 4304 / JCM 9628 / NBRC 100126 / VC-16).